The following is a 624-amino-acid chain: Dihydroxy-acid dehydratase (624 aa).

Residue Asp-81 participates in Mg(2+) binding. Cys-122 provides a ligand contact to [2Fe-2S] cluster. Mg(2+) contacts are provided by Asp-123 and Lys-124. N6-carboxylysine is present on Lys-124. Cys-195 lines the [2Fe-2S] cluster pocket. Position 499 (Glu-499) interacts with Mg(2+). Residue Ser-525 is the Proton acceptor of the active site.

Belongs to the IlvD/Edd family. Homodimer. It depends on [2Fe-2S] cluster as a cofactor. Mg(2+) serves as cofactor.

It carries out the reaction (2R)-2,3-dihydroxy-3-methylbutanoate = 3-methyl-2-oxobutanoate + H2O. The enzyme catalyses (2R,3R)-2,3-dihydroxy-3-methylpentanoate = (S)-3-methyl-2-oxopentanoate + H2O. The protein operates within amino-acid biosynthesis; L-isoleucine biosynthesis; L-isoleucine from 2-oxobutanoate: step 3/4. It participates in amino-acid biosynthesis; L-valine biosynthesis; L-valine from pyruvate: step 3/4. Functions in the biosynthesis of branched-chain amino acids. Catalyzes the dehydration of (2R,3R)-2,3-dihydroxy-3-methylpentanoate (2,3-dihydroxy-3-methylvalerate) into 2-oxo-3-methylpentanoate (2-oxo-3-methylvalerate) and of (2R)-2,3-dihydroxy-3-methylbutanoate (2,3-dihydroxyisovalerate) into 2-oxo-3-methylbutanoate (2-oxoisovalerate), the penultimate precursor to L-isoleucine and L-valine, respectively. The sequence is that of Dihydroxy-acid dehydratase from Shewanella baltica (strain OS155 / ATCC BAA-1091).